Reading from the N-terminus, the 508-residue chain is Nucleolar complex protein 4 homolog (508 aa).

3 helical membrane passes run 288–308, 341–361, and 367–387; these read VAYGVGGAISLLALNGLFILI, HLADLFLSSSHLPAYLVAAFI, and LALTAPPEALLMVIPFICNLF.

This sequence belongs to the CBF/MAK21 family.

Its subcellular location is the nucleus membrane. It is found in the nucleus. The protein localises to the nucleolus. In Gallus gallus (Chicken), this protein is Nucleolar complex protein 4 homolog (NOC4L).